A 395-amino-acid chain; its full sequence is ATP phosphoribosyltransferase regulatory subunit (395 aa).

The protein belongs to the class-II aminoacyl-tRNA synthetase family. HisZ subfamily. As to quaternary structure, heteromultimer composed of HisG and HisZ subunits.

It is found in the cytoplasm. It participates in amino-acid biosynthesis; L-histidine biosynthesis; L-histidine from 5-phospho-alpha-D-ribose 1-diphosphate: step 1/9. Functionally, required for the first step of histidine biosynthesis. May allow the feedback regulation of ATP phosphoribosyltransferase activity by histidine. This is ATP phosphoribosyltransferase regulatory subunit from Pseudomonas putida (strain ATCC 700007 / DSM 6899 / JCM 31910 / BCRC 17059 / LMG 24140 / F1).